The sequence spans 324 residues: ATP synthase mitochondrial F1 complex assembly factor 1 (324 aa).

The transit peptide at 1 to 54 directs the protein to the mitochondrion; that stretch reads MAAVVSAAGGACPAVLQVAGLYRGLCAVRSRALGLGFVSPAQLRVFPVRRGSGL.

Belongs to the ATP11 family. In terms of assembly, interacts with ATP5F1B; involved in the assembly of the F1 component of the mitochondrial ATP synthase (ATPase). As to expression, widely expressed but with low level.

It is found in the mitochondrion inner membrane. In terms of biological role, has a complex stabilizing activity in the assembly of the mitochondrial F1-F0 complex. In Mus musculus (Mouse), this protein is ATP synthase mitochondrial F1 complex assembly factor 1.